A 313-amino-acid polypeptide reads, in one-letter code: Porphobilinogen deaminase (313 aa).

An S-(dipyrrolylmethanemethyl)cysteine modification is found at cysteine 240.

It belongs to the HMBS family. Monomer. Requires dipyrromethane as cofactor.

It carries out the reaction 4 porphobilinogen + H2O = hydroxymethylbilane + 4 NH4(+). Its pathway is porphyrin-containing compound metabolism; protoporphyrin-IX biosynthesis; coproporphyrinogen-III from 5-aminolevulinate: step 2/4. Functionally, tetrapolymerization of the monopyrrole PBG into the hydroxymethylbilane pre-uroporphyrinogen in several discrete steps. The chain is Porphobilinogen deaminase from Moorella thermoacetica (strain ATCC 39073 / JCM 9320).